The following is a 501-amino-acid chain: Flagellin (501 aa).

This sequence belongs to the bacterial flagellin family.

The protein resides in the secreted. Its subcellular location is the bacterial flagellum. Its function is as follows. Flagellin is the subunit protein which polymerizes to form the filaments of bacterial flagella. This is Flagellin (fliC) from Salmonella choleraesuis (strain SC-B67).